The primary structure comprises 822 residues: Protein SIEVE ELEMENT OCCLUSION A (822 aa).

The disordered stretch occupies residues 25 to 62; sequence PRSAEQRLADNAGERRPLAPRSHEDNPFGGHTDDHHVA. Over residues 28-62 the composition is skewed to basic and acidic residues; it reads AEQRLADNAGERRPLAPRSHEDNPFGGHTDDHHVA.

As to quaternary structure, can form homodimer. Expressed in phloem sieve elements.

Its function is as follows. Scaffold protein required to form the phloem filament matrix in sieve elements. This Arabidopsis thaliana (Mouse-ear cress) protein is Protein SIEVE ELEMENT OCCLUSION A.